The primary structure comprises 454 residues: Protein odr-4 homolog (454 aa).

2 helical membrane-spanning segments follow: residues 82–102 (MLPGGLLVLGVFIITTLELAN) and 432–452 (IGVIAAFTVAVLAAGISFHYF).

This sequence belongs to the ODR-4 family. As to expression, ubiquitously expressed.

It is found in the membrane. In terms of biological role, may play a role in the trafficking of a subset of G-protein coupled receptors. In Homo sapiens (Human), this protein is Protein odr-4 homolog.